The primary structure comprises 635 residues: Threonine--tRNA ligase (635 aa).

In terms of domain architecture, TGS spans 1-58; sequence MIRVICDNETFELPTGSTAADFASKIKNSHYFAGVVINDQIKDLSTTLSEGDVLKFVT. Residues 237-528 form a catalytic region; the sequence is DHRVLGTKLD…LIEHFKGRFP (292 aa). Zn(2+)-binding residues include Cys-328, His-379, and His-505.

This sequence belongs to the class-II aminoacyl-tRNA synthetase family. As to quaternary structure, homodimer. Requires Zn(2+) as cofactor.

The protein localises to the cytoplasm. The catalysed reaction is tRNA(Thr) + L-threonine + ATP = L-threonyl-tRNA(Thr) + AMP + diphosphate + H(+). Catalyzes the attachment of threonine to tRNA(Thr) in a two-step reaction: L-threonine is first activated by ATP to form Thr-AMP and then transferred to the acceptor end of tRNA(Thr). Also edits incorrectly charged L-seryl-tRNA(Thr). In Chlamydia felis (strain Fe/C-56) (Chlamydophila felis), this protein is Threonine--tRNA ligase.